The primary structure comprises 831 residues: MSSESHDKVVAKAIRLPTENYSVEKEIGKGSFAVVYKGLSLRDGRNIAIKAVSRSKLKNKKLLENLEVEIAILKKIKHPHIVGLIDCERTSSDFYLIMEYCALGDLTFFIKKRKNLVLKHPLIKTVFEHYPPPSTEHNGLNRVLVVNYLQQLSSALKFLRSKNLVHRDIKPQNLLLCTPLLDYNDPKTFHELGFVGIYNLPILKIADFGFARFLPNTSLAETLCGSPLYMAPEILNYQKYNAKADLWSVGTVLYEMCCGRPPFKASNHLELFQKIKKANDEITVPSNCYIEPKLFNLIRGLLTFDPDSRMGFTDFFNNEVVTEDLTRYEQSYEPDLESKSKDVAESNMFVSEYLVKPLKQQESAHIPPTQTDENTSVQTGVRRTSGKERLATNHPPHQQIHPEDNSQNPEQSYQSASQKRLKSSYNDLILEKEYVVVEKKTVEVNSLADDFANNGPITNNQGAQVIKPLRYRTSSSSDASGGRRASLVERRLSISSLSPSNALSKALGLASVRLFGYQHNTKATSSPPQQTLLNPQIFQELTENAVLRADHKLNPFSEQMLDSNITPAVESLAAKAFVMYSFAEMKFSQILPTPPSSTDYDPLSDKRLSNGSCAIEDEEDLDQGRPPSNQTLTSATTKISSATNVDTQIPAPELKKLCTESLLLYLKALTILAASMKLTSKWWYENESKNCTLKLNILVQWIRDRFNECLDKAEFLRLKLHAINTSPNSQWSDDDPVIFVEKLIYDRALDISRNAARMEMESGNYNTCELAYATSLWMLEILLDENFQFNEVYDDEYASNITSLDESDKEMIKKYISSIANRLKALKSKMV.

Residues 21–321 (YSVEKEIGKG…FTDFFNNEVV (301 aa)) enclose the Protein kinase domain. ATP-binding positions include 27-35 (IGKGSFAVV) and lysine 50. Aspartate 168 (proton acceptor) is an active-site residue. 2 stretches are compositionally biased toward polar residues: residues 360–382 (QQES…TGVR) and 405–419 (NSQN…ASQK). Residues 360–419 (QQESAHIPPTQTDENTSVQTGVRRTSGKERLATNHPPHQQIHPEDNSQNPEQSYQSASQK) are disordered.

Belongs to the protein kinase superfamily. Ser/Thr protein kinase family. APG1/unc-51/ULK1 subfamily. In terms of assembly, homodimer. Forms a ternary complex with ATG13 and ATG17.

It localises to the cytoplasm. Its subcellular location is the preautophagosomal structure membrane. The catalysed reaction is L-seryl-[protein] + ATP = O-phospho-L-seryl-[protein] + ADP + H(+). The enzyme catalyses L-threonyl-[protein] + ATP = O-phospho-L-threonyl-[protein] + ADP + H(+). Serine/threonine protein kinase involved in the cytoplasm to vacuole transport (Cvt) and found to be essential in autophagy, where it is required for the formation of autophagosomes. Involved in the clearance of protein aggregates which cannot be efficiently cleared by the proteasome. Required for selective autophagic degradation of the nucleus (nucleophagy) as well as for mitophagy which contributes to regulate mitochondrial quantity and quality by eliminating the mitochondria to a basal level to fulfill cellular energy requirements and preventing excess ROS production. Also involved in endoplasmic reticulum-specific autophagic process, in selective removal of ER-associated degradation (ERAD) substrates. Plays a key role in ATG9 and ATG23 cycling through the pre-autophagosomal structure and is necessary to promote ATG18 binding to ATG9 through phosphorylation of ATG9. Catalyzes phosphorylation of ATG4, decreasing the interaction between ATG4 and ATG8 and impairing deconjugation of PE-conjugated forms of ATG8. This is Serine/threonine-protein kinase ATG1 from Kluyveromyces lactis (strain ATCC 8585 / CBS 2359 / DSM 70799 / NBRC 1267 / NRRL Y-1140 / WM37) (Yeast).